Here is a 91-residue protein sequence, read N- to C-terminus: Small ribosomal subunit protein uS19 (91 aa).

The protein belongs to the universal ribosomal protein uS19 family.

Its function is as follows. Protein S19 forms a complex with S13 that binds strongly to the 16S ribosomal RNA. The protein is Small ribosomal subunit protein uS19 of Pseudomonas syringae pv. syringae (strain B728a).